The primary structure comprises 289 residues: Urease accessory protein UreD (289 aa).

This sequence belongs to the UreD family. UreD, UreF and UreG form a complex that acts as a GTP-hydrolysis-dependent molecular chaperone, activating the urease apoprotein by helping to assemble the nickel containing metallocenter of UreC. The UreE protein probably delivers the nickel.

Its subcellular location is the cytoplasm. Its function is as follows. Required for maturation of urease via the functional incorporation of the urease nickel metallocenter. The polypeptide is Urease accessory protein UreD (Cupriavidus necator (strain ATCC 17699 / DSM 428 / KCTC 22496 / NCIMB 10442 / H16 / Stanier 337) (Ralstonia eutropha)).